Here is a 397-residue protein sequence, read N- to C-terminus: DNA-directed RNA polymerase subunit Rpo1C (397 aa).

This sequence belongs to the RNA polymerase beta' chain family. Part of the RNA polymerase complex. An artificial construct of the RNAP clamp domain (including part of this protein) contacts transcription elongation factors Spt4 and Spt5.

The protein resides in the cytoplasm. The enzyme catalyses RNA(n) + a ribonucleoside 5'-triphosphate = RNA(n+1) + diphosphate. Its function is as follows. DNA-dependent RNA polymerase (RNAP) catalyzes the transcription of DNA into RNA using the four ribonucleoside triphosphates as substrates. Forms part of the jaw domain. This Pyrococcus furiosus (strain ATCC 43587 / DSM 3638 / JCM 8422 / Vc1) protein is DNA-directed RNA polymerase subunit Rpo1C.